A 504-amino-acid chain; its full sequence is Maturase K (504 aa).

It belongs to the intron maturase 2 family. MatK subfamily.

The protein resides in the plastid. It localises to the chloroplast. Usually encoded in the trnK tRNA gene intron. Probably assists in splicing its own and other chloroplast group II introns. The sequence is that of Maturase K from Actinidia chinensis (Kiwi).